Consider the following 54-residue polypeptide: ATP synthase protein 8 (54 aa).

Residues Trp-8–Leu-28 form a helical membrane-spanning segment.

It belongs to the ATPase protein 8 family. F-type ATPases have 2 components, CF(1) - the catalytic core - and CF(0) - the membrane proton channel.

It localises to the mitochondrion membrane. Mitochondrial membrane ATP synthase (F(1)F(0) ATP synthase or Complex V) produces ATP from ADP in the presence of a proton gradient across the membrane which is generated by electron transport complexes of the respiratory chain. F-type ATPases consist of two structural domains, F(1) - containing the extramembraneous catalytic core and F(0) - containing the membrane proton channel, linked together by a central stalk and a peripheral stalk. During catalysis, ATP synthesis in the catalytic domain of F(1) is coupled via a rotary mechanism of the central stalk subunits to proton translocation. Part of the complex F(0) domain. Minor subunit located with subunit a in the membrane. This is ATP synthase protein 8 (MT-ATP8) from Patiria pectinifera (Starfish).